The primary structure comprises 175 residues: ATP synthase subunit b (175 aa).

Residues 20-40 form a helical membrane-spanning segment; sequence LIFWTAVTFVIVLLILKQLAW.

Belongs to the ATPase B chain family. In terms of assembly, F-type ATPases have 2 components, F(1) - the catalytic core - and F(0) - the membrane proton channel. F(1) has five subunits: alpha(3), beta(3), gamma(1), delta(1), epsilon(1). F(0) has four main subunits: a(1), b(2) and c(10-14). The alpha and beta chains form an alternating ring which encloses part of the gamma chain. F(1) is attached to F(0) by a central stalk formed by the gamma and epsilon chains, while a peripheral stalk is formed by the delta and b chains.

It localises to the cell inner membrane. Functionally, f(1)F(0) ATP synthase produces ATP from ADP in the presence of a proton or sodium gradient. F-type ATPases consist of two structural domains, F(1) containing the extramembraneous catalytic core and F(0) containing the membrane proton channel, linked together by a central stalk and a peripheral stalk. During catalysis, ATP synthesis in the catalytic domain of F(1) is coupled via a rotary mechanism of the central stalk subunits to proton translocation. In terms of biological role, component of the F(0) channel, it forms part of the peripheral stalk, linking F(1) to F(0). In Chlorobium limicola (strain DSM 245 / NBRC 103803 / 6330), this protein is ATP synthase subunit b.